A 530-amino-acid chain; its full sequence is Type 2 DNA topoisomerase 6 subunit B (530 aa).

ATP contacts are provided by residues N42, D76, 97–98, 106–113, and K427; these read SK and GMYGLGVK.

It belongs to the TOP6B family. Homodimer. Heterotetramer of two Top6A and two Top6B chains.

The enzyme catalyses ATP-dependent breakage, passage and rejoining of double-stranded DNA.. In terms of biological role, relaxes both positive and negative superturns and exhibits a strong decatenase activity. This chain is Type 2 DNA topoisomerase 6 subunit B, found in Saccharolobus solfataricus (strain ATCC 35092 / DSM 1617 / JCM 11322 / P2) (Sulfolobus solfataricus).